Here is a 137-residue protein sequence, read N- to C-terminus: TM2 domain-containing protein DDB_G0287015 (137 aa).

A TM2 domain is found at 9–57 (QASLVVAYLLLIFLGFFGVHRFYVGRTISGVVYLLTGGIFGIGYIVDFF). Helical transmembrane passes span 12–32 (LVVAYLLLIFLGFFGVHRFYV) and 39–59 (VVYLLTGGIFGIGYIVDFFLL). The segment at 106–137 (IQPQQQQYYQQPYQQQQYQPQPYQPNSPQYQP) is disordered.

This sequence belongs to the TM2 family.

The protein localises to the membrane. In Dictyostelium discoideum (Social amoeba), this protein is TM2 domain-containing protein DDB_G0287015.